The chain runs to 570 residues: Urease subunit alpha (570 aa).

The region spanning 131 to 570 is the Urease domain; that stretch reads GGFDSHIHFI…LPMAQRYFMY (440 aa). Histidine 136, histidine 138, and lysine 219 together coordinate Ni(2+). Position 219 is an N6-carboxylysine (lysine 219). Histidine 221 contributes to the substrate binding site. Positions 248 and 274 each coordinate Ni(2+). Catalysis depends on histidine 322, which acts as the Proton donor. Residue aspartate 362 coordinates Ni(2+).

It belongs to the metallo-dependent hydrolases superfamily. Urease alpha subunit family. Heterotrimer of UreA (gamma), UreB (beta) and UreC (alpha) subunits. Three heterotrimers associate to form the active enzyme. Ni cation is required as a cofactor. Post-translationally, carboxylation allows a single lysine to coordinate two nickel ions.

The protein localises to the cytoplasm. It catalyses the reaction urea + 2 H2O + H(+) = hydrogencarbonate + 2 NH4(+). Its pathway is nitrogen metabolism; urea degradation; CO(2) and NH(3) from urea (urease route): step 1/1. This Rhodopseudomonas palustris (strain BisB18) protein is Urease subunit alpha.